We begin with the raw amino-acid sequence, 525 residues long: Phosphatidylinositol 4-kinase alpha 2 (525 aa).

The tract at residues Ser163 to Val278 is pleckstrin homology (PH) domain conferring phosphoinositide binding specificity. The 271-residue stretch at Val239–Thr509 folds into the PI3K/PI4K catalytic domain. The interval Leu245–Val251 is G-loop. Residues Gln373–Asn381 are catalytic loop. The activation loop stretch occupies residues His392–Ser417.

The protein belongs to the PI3/PI4-kinase family. Type III PI4K subfamily.

It is found in the membrane. The enzyme catalyses a 1,2-diacyl-sn-glycero-3-phospho-(1D-myo-inositol) + ATP = a 1,2-diacyl-sn-glycero-3-phospho-(1D-myo-inositol 4-phosphate) + ADP + H(+). Acts on phosphatidylinositol (PtdIns) in the first committed step in the production of the second messenger inositol-1,4,5,-trisphosphate. This Arabidopsis thaliana (Mouse-ear cress) protein is Phosphatidylinositol 4-kinase alpha 2 (PI4KA2).